We begin with the raw amino-acid sequence, 1270 residues long: DNA-directed RNA polymerase subunit beta (1270 aa).

Belongs to the RNA polymerase beta chain family. The RNAP catalytic core consists of 2 alpha, 1 beta, 1 beta' and 1 omega subunit. When a sigma factor is associated with the core the holoenzyme is formed, which can initiate transcription.

The enzyme catalyses RNA(n) + a ribonucleoside 5'-triphosphate = RNA(n+1) + diphosphate. Its function is as follows. DNA-dependent RNA polymerase catalyzes the transcription of DNA into RNA using the four ribonucleoside triphosphates as substrates. The polypeptide is DNA-directed RNA polymerase subunit beta (Flavobacterium psychrophilum (strain ATCC 49511 / DSM 21280 / CIP 103535 / JIP02/86)).